Consider the following 759-residue polypeptide: Protein YdeP (759 aa).

Positions 49 and 52 each coordinate [4Fe-4S] cluster.

Belongs to the prokaryotic molybdopterin-containing oxidoreductase family. [4Fe-4S] cluster serves as cofactor. Requires Mo-bis(molybdopterin guanine dinucleotide) as cofactor.

Its function is as follows. Probably involved in acid resistance. In Escherichia coli O6:H1 (strain CFT073 / ATCC 700928 / UPEC), this protein is Protein YdeP (ydeP).